A 156-amino-acid polypeptide reads, in one-letter code: Small ribosomal subunit protein uS7c (156 aa).

This sequence belongs to the universal ribosomal protein uS7 family. Part of the 30S ribosomal subunit.

The protein localises to the plastid. The protein resides in the chloroplast. Functionally, one of the primary rRNA binding proteins, it binds directly to 16S rRNA where it nucleates assembly of the head domain of the 30S subunit. This is Small ribosomal subunit protein uS7c (rps7) from Phaeodactylum tricornutum (strain CCAP 1055/1).